Reading from the N-terminus, the 463-residue chain is MHEKLTTRFAPSPTGYLHIGGLRTALYNYLYARKNGGNFLLRIEDTDLKRNSKEATKAIIEAFKWCGLEHDGEVTYQSERFDLYKEYVKKLLDEGKAYYCYMSKEELEELRAKQEAAKERPRYDGRYREFTGTPPQGIEPVVRIKAPQSGEIVFEDGVKGEVRFKAEDIMDDFIIARSDGTPTYNFTVVIDDALMGVSDVIRGDDHLSNTPKQIVLYEALGFKIPKFFHVAMIHGEDGKKLSKRHGATDVMEYKEMGILPQALLNFLVRLGWSHGDDEVFSLEDLKKLFDPYHINKSASCYNAKKLEWLNAHYIKTLPFEEINRQLKDLGFDLSVYEKAGFLLDLLRERAKTLHDIINGAKSIVNAPQNYDENAVQKFVNKNNLELLQAFANTLKDQKTGKDFEDFTNDFLEKKEAKLKDLAQPIRIALTGSAVSPSIFEVLEFLGVDECKKRIDNFLKVRGK.

A 'HIGH' region motif is present at residues 11 to 21; it reads PSPTGYLHIGG. A 'KMSKS' region motif is present at residues 240–244; that stretch reads KLSKR. Lysine 243 serves as a coordination point for ATP.

This sequence belongs to the class-I aminoacyl-tRNA synthetase family. Glutamate--tRNA ligase type 1 subfamily. In terms of assembly, monomer.

It is found in the cytoplasm. The catalysed reaction is tRNA(Glu) + L-glutamate + ATP = L-glutamyl-tRNA(Glu) + AMP + diphosphate. Its function is as follows. Catalyzes the attachment of glutamate to tRNA(Glu) in a two-step reaction: glutamate is first activated by ATP to form Glu-AMP and then transferred to the acceptor end of tRNA(Glu). The polypeptide is Glutamate--tRNA ligase 2 (Campylobacter jejuni subsp. jejuni serotype O:2 (strain ATCC 700819 / NCTC 11168)).